We begin with the raw amino-acid sequence, 1921 residues long: Histone transcription regulator 3 homolog (1921 aa).

Disordered stretches follow at residues 350-439, 1402-1466, 1738-1769, and 1799-1921; these read IGEV…LEKQ, GEDA…ATPV, PGSA…KTRV, and KGPP…SAPE. Basic and acidic residues-rich tracts occupy residues 353-376 and 391-400; these read VENK…KKEA and TTVKTEDRDS. Polar residues predominate over residues 413–422; the sequence is GTTSSSQPPS. Residues 428–439 show a composition bias toward basic and acidic residues; the sequence is RGADEPAELEKQ. A compositionally biased stretch (acidic residues) spans 1402-1425; the sequence is GEDADMESGDDSDSDSEVGSDSET. The span at 1757–1769 shows a compositional bias: basic and acidic residues; it reads GKKEDGKKEKTRV. The segment covering 1806 to 1818 has biased composition (low complexity); it reads SSNGSSSNSGTRS. Composition is skewed to basic and acidic residues over residues 1819–1836 and 1861–1890; these read NSEE…KSTQ and EADK…EKSA. Residues 1899–1910 show a composition bias toward polar residues; that stretch reads TPKSKSTGSNGV.

It belongs to the HIR3 family.

It is found in the nucleus. In terms of biological role, has a role in a nucleosome assembly pathway that is required for the integrity of heterochromatin and proper chromosome segregation. This Yarrowia lipolytica (strain CLIB 122 / E 150) (Yeast) protein is Histone transcription regulator 3 homolog (HIR3).